The following is a 51-amino-acid chain: Sperm protamine P1 (51 aa).

This sequence belongs to the protamine P1 family. As to expression, testis.

The protein localises to the nucleus. It is found in the chromosome. Its function is as follows. Protamines substitute for histones in the chromatin of sperm during the haploid phase of spermatogenesis. They compact sperm DNA into a highly condensed, stable and inactive complex. This Piliocolobus badius (Western red colobus) protein is Sperm protamine P1 (PRM1).